The following is a 447-amino-acid chain: uncharacterized protein (447 aa).

This sequence to E.coli plasmid IncP-alpha RP4 protein TraN.

This is an uncharacterized protein from Haemophilus influenzae (strain ATCC 51907 / DSM 11121 / KW20 / Rd).